The primary structure comprises 359 residues: MSTENTLSVADLARENVRNLVPYQSARRLGGNGDVWLNANEFPTAVEFQLTQQTLNRYPECQPKAVIENYAQYAGVKPEQVLVSRGADEGIELMIRAFCEPGKDAILYCPPTYGMYSVSAETIGVERRTVPALENWQLDLQGISDNLDGTKVVFVCSPNNPTGQLINPQDLRTLLELTRGKAIVVADEAYIEFCPQATLTGWLVEYPHLVILRTLSKAFALAGLRCGFTLANEEVINLLLKVIAPYPLSTPVADIAAQALSPQGINAMRDRVAQTVQERQYLVNALQQTACVEHVFDSETNYILARFTASSNVFKSLWDQGIILRDQNKQPSLSGCLRITVGTRQENQRVIDALRAEPV.

Lys217 is modified (N6-(pyridoxal phosphate)lysine).

This sequence belongs to the class-II pyridoxal-phosphate-dependent aminotransferase family. Histidinol-phosphate aminotransferase subfamily. In terms of assembly, homodimer. It depends on pyridoxal 5'-phosphate as a cofactor.

It catalyses the reaction L-histidinol phosphate + 2-oxoglutarate = 3-(imidazol-4-yl)-2-oxopropyl phosphate + L-glutamate. It functions in the pathway amino-acid biosynthesis; L-histidine biosynthesis; L-histidine from 5-phospho-alpha-D-ribose 1-diphosphate: step 7/9. This Salmonella choleraesuis (strain SC-B67) protein is Histidinol-phosphate aminotransferase.